Consider the following 102-residue polypeptide: Putative pterin-4-alpha-carbinolamine dehydratase (102 aa).

Belongs to the pterin-4-alpha-carbinolamine dehydratase family.

It carries out the reaction (4aS,6R)-4a-hydroxy-L-erythro-5,6,7,8-tetrahydrobiopterin = (6R)-L-erythro-6,7-dihydrobiopterin + H2O. The sequence is that of Putative pterin-4-alpha-carbinolamine dehydratase from Burkholderia cenocepacia (strain HI2424).